The following is a 732-amino-acid chain: Segment polarity protein dishevelled homolog DVL-2 (732 aa).

One can recognise a DIX domain in the interval 1–82; that stretch reads MAETKVIYHL…RVVSWLVSSE (82 aa). 2 disordered regions span residues 81–181 and 195–237; these read SETS…SSST and EEDD…SSFS. A compositionally biased stretch (pro residues) spans 98-111; sequence DPPPVPPPVPPPPA. The span at 146–157 shows a compositional bias: basic and acidic residues; that stretch reads MRRDRVRRRDST. Residues 202-213 are compositionally biased toward polar residues; it reads RFSSSTEQSSAS. Basic residues predominate over residues 215–227; the sequence is LLKRHRRRRKQRP. The region spanning 250–335 is the PDZ domain; the sequence is TVTLNMEKYN…KPGPIILTVA (86 aa). A DEP domain is found at 424-498; sequence PESGLEVRDR…SEQCYYIFGD (75 aa). 3 stretches are compositionally biased toward low complexity: residues 570–589, 612–629, and 637–647; these read MGSA…SNRS, KSGS…SIRR, and PPSERSTSSRP. The disordered stretch occupies residues 570–660; that stretch reads MGSAGSQHSE…HPPSVHSYAA (91 aa).

This sequence belongs to the DSH family. As to quaternary structure, can form homomultimers. Interacts with prickle1. Interacts (via the PDZ domain) with ccdc88c/dal and dact1-B/dpr. Interacts (via the DIX domain) with ARP/Axin-related protein and dact1-A/frodo. Interacts with sdc4, possibly via fz7. Interacts directly (via the DEP domain) with efnb1/ephrin-B1. May interact indirectly with the phosphorylated ephrin receptors ephb1 and ephb2 via SH domain-containing adapters. Post-translationally, phosphorylated. Phosphorylation is controlled by frizzled proteins, correlates with the onset of embryo dorsalizing events and is higher in the dorsal half of early cleavage embryos. Phosphorylated on tyrosine residues in response to association with efnb1/ephrin-B1.

It is found in the cytoplasm. The protein resides in the cytoplasmic vesicle. The protein localises to the cell projection. It localises to the cilium. Its subcellular location is the nucleus. It is found in the cell membrane. In terms of biological role, involved in at least 2 independent signaling cascades, controlling cell fate via canonical Wnt signaling and cell polarity via a planar cell polarity (PCP) cascade. Acts synergistically with dal/dapple-like to activate Wnt signaling, stabilizing ctnnb1/beta-catenin and leading to dorsal axis formation. Also prevents degradation of ctnnb1/beta-catenin by displacing gsk3 from a complex with ARP/Axin-related protein. Has an additional role in anterior-posterior (A/P) axis formation, specifying different neuroectodermal cell fates along the A/P axis in a dose-dependent manner by activating several early patterning genes. In the PCP pathway, required at the cell membrane for PCP-mediated neural and mesodermal convergent extension during gastrulation and subsequent neural tube closure, acting to activate jnk. Also involved in blastopore closure and archenteron elongation during early, but not late, gastrulation. Associates with ephrin receptors and ligands and acts as part of a downstream PCP pathway to mediate ephrin-mediated cell repulsion via activation of rhoa. Required for efnb1/ephrin-B1-driven movement of non-retinal progenitor cells into the retina during eye field formation. Patterns the hindbrain. Required for ciliogenesis. Controls the docking of basal bodies to the apical plasma membrane; mediates the activation, but not localization of rhoa at the apical surface of ciliated cells during basal body docking. Furthermore, required for the association of basal bodies with membrane-bound vesicles and the vesicle-trafficking protein exoc4/sec8, and this association is in turn required for basal body docking. Once basal bodies are docked, required for the planar polarization of basal bodies that underlies ciliary beating and the directional fluid flow across ciliated epithelia. The chain is Segment polarity protein dishevelled homolog DVL-2 from Xenopus tropicalis (Western clawed frog).